The following is a 416-amino-acid chain: UPF0761 membrane protein Mpe_A1422 (416 aa).

Helical transmembrane passes span 63–83 (IALV…PMFG), 120–140 (LGTV…LTID), 159–179 (VLVY…SLTL), 198–218 (LSVL…AGLF), 234–256 (GGLF…LAQV), and 271–291 (IFLI…VIAA).

The protein belongs to the UPF0761 family.

The protein resides in the cell inner membrane. In Methylibium petroleiphilum (strain ATCC BAA-1232 / LMG 22953 / PM1), this protein is UPF0761 membrane protein Mpe_A1422.